The sequence spans 165 residues: Nucleotide-binding protein Syncc9902_1708 (165 aa).

This sequence belongs to the YajQ family.

Functionally, nucleotide-binding protein. The sequence is that of Nucleotide-binding protein Syncc9902_1708 from Synechococcus sp. (strain CC9902).